A 571-amino-acid polypeptide reads, in one-letter code: Quinone-dependent D-lactate dehydrogenase (571 aa).

In terms of domain architecture, FAD-binding PCMH-type spans G42–D213. FAD contacts are provided by residues A76 to G80, G84 to S85, G143, S150, G160, and V262. Positions R546–E571 are disordered.

It belongs to the quinone-dependent D-lactate dehydrogenase family. Requires FAD as cofactor.

Its subcellular location is the cell inner membrane. The enzyme catalyses (R)-lactate + a quinone = a quinol + pyruvate. Inhibited by 2-hydroxy-3-butynoic acid, but not by p-chloromercuribenzoate, n-ethylmaleimide, or 5,5'-dithiobis(2-nitrobenzoic acid). Its function is as follows. Catalyzes the oxidation of D-lactate to pyruvate. Electrons derived from D-lactate oxidation are transferred to the ubiquinone/cytochrome electron transfer chain, where they may be used to provide energy for the active transport of a variety of amino acids and sugars across the membrane. In Escherichia coli (strain K12), this protein is Quinone-dependent D-lactate dehydrogenase.